A 617-amino-acid polypeptide reads, in one-letter code: UvrABC system protein C (617 aa).

The region spanning 11 to 85 (TTPGVYIFRK…IKQHRPHYNV (75 aa)) is the GIY-YIG domain. Residues 194-229 (APVIARLKEDMKVAAQGQDFEQAARLRDRVQAVEKL) form the UVR domain.

This sequence belongs to the UvrC family. As to quaternary structure, interacts with UvrB in an incision complex.

Its subcellular location is the cytoplasm. The UvrABC repair system catalyzes the recognition and processing of DNA lesions. UvrC both incises the 5' and 3' sides of the lesion. The N-terminal half is responsible for the 3' incision and the C-terminal half is responsible for the 5' incision. This is UvrABC system protein C from Deinococcus radiodurans (strain ATCC 13939 / DSM 20539 / JCM 16871 / CCUG 27074 / LMG 4051 / NBRC 15346 / NCIMB 9279 / VKM B-1422 / R1).